Reading from the N-terminus, the 1463-residue chain is Secretory phospholipase A2 receptor (1463 aa).

Positions 1–20 (MPLLSLSLLLLLLQVPAGSA) are cleaved as a signal peptide. At 21 to 1392 (ETAAWAVTPE…IHTVKKHPGK (1372 aa)) the chain is on the extracellular side. The 78-residue stretch at 38–115 (KGIFIIQSEN…CDSTHVSLKW (78 aa)) folds into the Ricin B-type lectin domain. Asn93 carries an N-linked (GlcNAc...) asparagine glycan. The Fibronectin type-II domain occupies 173-221 (AHGTPCMFPFQYNQQWHHECTREGREDNLLWCATTSRYERDEKWGFCPD). 16 disulfide bridges follow: Cys178/Cys204, Cys192/Cys219, Cys260/Cys354, Cys330/Cys346, Cys406/Cys501, Cys478/Cys493, Cys617/Cys634, Cys699/Cys796, Cys774/Cys788, Cys840/Cys938, Cys915/Cys930, Cys992/Cys1096, Cys1068/Cys1088, Cys1209/Cys1223, Cys1280/Cys1377, and Cys1354/Cys1369. C-type lectin domains lie at 229–353 (CDAV…LPYV), 357–500 (YLNP…LFYL), 504–641 (TGLV…KAMS), 646–795 (PVEN…REWI), 799–937 (PRDV…MPSI), 941–1095 (KKVW…YGFV), 1099–1230 (MQDA…LQGA), and 1235–1376 (PTET…KGFI). Asn454 carries an N-linked (GlcNAc...) asparagine glycan. Asn1057 carries N-linked (GlcNAc...) asparagine glycosylation. Residues 1393–1421 (GPSHSVIPLTVALTLLVILAISTLSFCMY) traverse the membrane as a helical segment. At 1422 to 1463 (KHSHIIFGRLAQFRNPYYPSANFSTVHLEENILISDLEKNDQ) the chain is on the cytoplasmic side. The Endocytosis signal motif lies at 1436–1442 (NPYYPSA).

Interacts with sPLA2-IB/PLA2G1B; this interaction mediates intracellular signaling as well as clearance of extracellular sPLA2-IB/PLA2G1B via endocytotic pathway. Interacts with sPLA2-X/PLA2G10; this interaction mediates sPLA2-X/PLA2G10 clearance and inactivation. The secretory phospholipase A2 receptor form may be produced by the action of metalloproteinases. It contains all extracellular domains and only lacks transmembrane and cytosolic regions. It is however unclear whether this form is produced by proteolytic cleavage as suggested by some experiments, or by alternative splicing.

The protein localises to the cell membrane. It localises to the secreted. Receptor for secretory phospholipase A2 (sPLA2). Also able to bind to snake PA2-like toxins. Although its precise function remains unclear, binding of sPLA2 to its receptor participates in both positive and negative regulation of sPLA2 functions as well as clearance of sPLA2. Binding of sPLA2-IB/PLA2G1B induces various effects depending on the cell type, such as activation of the mitogen-activated protein kinase (MAPK) cascade to induce cell proliferation, the production of lipid mediators, selective release of arachidonic acid in bone marrow-derived mast cells. In neutrophils, binding of sPLA2-IB/PLA2G1B can activate p38 MAPK to stimulate elastase release and cell adhesion. May be involved in responses in pro-inflammatory cytokine productions during endotoxic shock. Also has endocytic properties and rapidly internalizes sPLA2 ligands, which is particularly important for the clearance of extracellular sPLA2s to protect their potent enzymatic activities. The soluble secretory phospholipase A2 receptor form is circulating and acts as a negative regulator of sPLA2 functions by blocking the biological functions of sPLA2-IB/PLA2G1B and sPLA2-X/PLA2G10. In Bos taurus (Bovine), this protein is Secretory phospholipase A2 receptor (PLA2R1).